The following is a 458-amino-acid chain: UPF0210 protein Mevan_0738 (458 aa).

This sequence belongs to the UPF0210 family.

This chain is UPF0210 protein Mevan_0738, found in Methanococcus vannielii (strain ATCC 35089 / DSM 1224 / JCM 13029 / OCM 148 / SB).